We begin with the raw amino-acid sequence, 466 residues long: Uronate isomerase (466 aa).

This sequence belongs to the metallo-dependent hydrolases superfamily. Uronate isomerase family.

It catalyses the reaction D-glucuronate = D-fructuronate. It carries out the reaction aldehydo-D-galacturonate = keto-D-tagaturonate. It functions in the pathway carbohydrate metabolism; pentose and glucuronate interconversion. This is Uronate isomerase from Clostridium perfringens (strain 13 / Type A).